The primary structure comprises 119 residues: Cysteine-rich DPF motif domain-containing protein 1 (119 aa).

This sequence belongs to the CDPF1 family.

The protein is Cysteine-rich DPF motif domain-containing protein 1 (Cdpf1) of Mus musculus (Mouse).